Here is a 1378-residue protein sequence, read N- to C-terminus: DNA-directed RNA polymerase subunit beta' (1378 aa).

4 residues coordinate Zn(2+): cysteine 69, cysteine 71, cysteine 84, and cysteine 87. Residues aspartate 460, aspartate 462, and aspartate 464 each coordinate Mg(2+). Positions 808, 882, 889, and 892 each coordinate Zn(2+).

This sequence belongs to the RNA polymerase beta' chain family. As to quaternary structure, the RNAP catalytic core consists of 2 alpha, 1 beta, 1 beta' and 1 omega subunit. When a sigma factor is associated with the core the holoenzyme is formed, which can initiate transcription. Mg(2+) serves as cofactor. Zn(2+) is required as a cofactor.

It catalyses the reaction RNA(n) + a ribonucleoside 5'-triphosphate = RNA(n+1) + diphosphate. DNA-dependent RNA polymerase catalyzes the transcription of DNA into RNA using the four ribonucleoside triphosphates as substrates. This is DNA-directed RNA polymerase subunit beta' from Rickettsia canadensis (strain McKiel).